The following is an 83-amino-acid chain: MSSGGLLLLLGLLTLWEVLTPVSSKDRPNFCHLPHDTGPCKRNTQAFYYNPVYHTCLKFIYSGCEGNANNFKTIDECKRTCAT.

The first 24 residues, 1-24 (MSSGGLLLLLGLLTLWEVLTPVSS), serve as a signal peptide directing secretion. The 51-residue stretch at 31 to 81 (CHLPHDTGPCKRNTQAFYYNPVYHTCLKFIYSGCEGNANNFKTIDECKRTC) folds into the BPTI/Kunitz inhibitor domain. Cystine bridges form between cysteine 31–cysteine 81, cysteine 40–cysteine 64, and cysteine 56–cysteine 77.

Belongs to the venom Kunitz-type family. In terms of tissue distribution, expressed by the venom gland.

The protein localises to the secreted. Its function is as follows. Serine protease inhibitor. The protein is Kunitz-type serine protease inhibitor superbin-4 of Austrelaps superbus (Lowland copperhead snake).